The primary structure comprises 482 residues: G patch domain-containing protein 2-like (482 aa).

A phosphoserine mark is found at S31, S86, and S88. Residue T91 is modified to Phosphothreonine. K196 is covalently cross-linked (Glycyl lysine isopeptide (Lys-Gly) (interchain with G-Cter in SUMO2)). Residues 198–214 (GRKERMECETDEQKQGS) are compositionally biased toward basic and acidic residues. 2 disordered regions span residues 198–247 (GRKE…DDEQ) and 413–482 (KRKR…PGYS). Low complexity predominate over residues 220 to 230 (ECETSSVCSSS). Residues 439–450 (TPASQAPKSPSS) show a composition bias toward polar residues. 2 positions are modified to phosphoserine: S447 and S449. Positions 456-469 (TSAAEKATDATTAT) are enriched in low complexity.

This is G patch domain-containing protein 2-like (GPATCH2L) from Homo sapiens (Human).